Consider the following 89-residue polypeptide: Co-chaperonin GroES (89 aa).

This sequence belongs to the GroES chaperonin family. In terms of assembly, heptamer of 7 subunits arranged in a ring. Interacts with the chaperonin GroEL.

The protein localises to the cytoplasm. In terms of biological role, together with the chaperonin GroEL, plays an essential role in assisting protein folding. The GroEL-GroES system forms a nano-cage that allows encapsulation of the non-native substrate proteins and provides a physical environment optimized to promote and accelerate protein folding. GroES binds to the apical surface of the GroEL ring, thereby capping the opening of the GroEL channel. This chain is Co-chaperonin GroES, found in Kosmotoga olearia (strain ATCC BAA-1733 / DSM 21960 / TBF 19.5.1).